The following is a 448-amino-acid chain: Glutamyl-tRNA reductase (448 aa).

Substrate is bound by residues 49 to 52 (TCNR), Ser109, 114 to 116 (ETQ), and Gln120. Catalysis depends on Cys50, which acts as the Nucleophile. 189–194 (GAGEMS) is an NADP(+) binding site.

It belongs to the glutamyl-tRNA reductase family. In terms of assembly, homodimer.

It carries out the reaction (S)-4-amino-5-oxopentanoate + tRNA(Glu) + NADP(+) = L-glutamyl-tRNA(Glu) + NADPH + H(+). It participates in porphyrin-containing compound metabolism; protoporphyrin-IX biosynthesis; 5-aminolevulinate from L-glutamyl-tRNA(Glu): step 1/2. In terms of biological role, catalyzes the NADPH-dependent reduction of glutamyl-tRNA(Glu) to glutamate 1-semialdehyde (GSA). In Staphylococcus aureus (strain bovine RF122 / ET3-1), this protein is Glutamyl-tRNA reductase.